A 272-amino-acid chain; its full sequence is Bifunctional protein FolD 2 (272 aa).

Residues 157–159 (GRS), Thr-182, and Ile-223 each bind NADP(+).

This sequence belongs to the tetrahydrofolate dehydrogenase/cyclohydrolase family. In terms of assembly, homodimer.

It carries out the reaction (6R)-5,10-methylene-5,6,7,8-tetrahydrofolate + NADP(+) = (6R)-5,10-methenyltetrahydrofolate + NADPH. The catalysed reaction is (6R)-5,10-methenyltetrahydrofolate + H2O = (6R)-10-formyltetrahydrofolate + H(+). It participates in one-carbon metabolism; tetrahydrofolate interconversion. Its function is as follows. Catalyzes the oxidation of 5,10-methylenetetrahydrofolate to 5,10-methenyltetrahydrofolate and then the hydrolysis of 5,10-methenyltetrahydrofolate to 10-formyltetrahydrofolate. The chain is Bifunctional protein FolD 2 from Syntrophomonas wolfei subsp. wolfei (strain DSM 2245B / Goettingen).